The sequence spans 89 residues: Otospiralin (89 aa).

The signal sequence occupies residues 1–21 (MQACMVPGLALCLLLGPLAGA).

This sequence belongs to the otospiralin family. Ear specific.

It localises to the secreted. In terms of biological role, may be essential for the survival of the neurosensory epithelium of the inner ear. This is Otospiralin (OTOS) from Homo sapiens (Human).